Here is a 275-residue protein sequence, read N- to C-terminus: MKYILLEIRLFFVCMSFLTRIPSPRWIGFQEEWLHHSIKYSPSVGFLLGSLQWFVFLLFQFLFGPTIAFTISLGFLLILTGAFHEDGFSDFCDGIGGGWKREDILRIMKDSRVGSFGAAGISLLLLLKVLGVSETFHQYEIKGLPFTFGSSAQIHLLSVWLYFVTAQSFSRFLSILMMKLLPYAKEEGYAKPMAKEINWPQIYFACIFGVTPFLALVYLHPYFLLSLLCIIPSFVYMFSLMKRWIQGFTGDCLGAVQQVVETCIWISGVFVWISI.

6 consecutive transmembrane segments (helical) span residues 53–73, 113–133, 144–164, 204–224, 225–245, and 253–273; these read WFVF…TISL, VGSF…LGVS, LPFT…LYFV, FACI…PYFL, LSLL…KRWI, and LGAV…FVWI.

Belongs to the CobS family. It depends on Mg(2+) as a cofactor.

Its subcellular location is the cell inner membrane. The enzyme catalyses alpha-ribazole + adenosylcob(III)inamide-GDP = adenosylcob(III)alamin + GMP + H(+). The catalysed reaction is alpha-ribazole 5'-phosphate + adenosylcob(III)inamide-GDP = adenosylcob(III)alamin 5'-phosphate + GMP + H(+). The protein operates within cofactor biosynthesis; adenosylcobalamin biosynthesis; adenosylcobalamin from cob(II)yrinate a,c-diamide: step 7/7. In terms of biological role, joins adenosylcobinamide-GDP and alpha-ribazole to generate adenosylcobalamin (Ado-cobalamin). Also synthesizes adenosylcobalamin 5'-phosphate from adenosylcobinamide-GDP and alpha-ribazole 5'-phosphate. This is Adenosylcobinamide-GDP ribazoletransferase from Leptospira biflexa serovar Patoc (strain Patoc 1 / Ames).